A 417-amino-acid chain; its full sequence is UDP-N-acetylglucosamine 1-carboxyvinyltransferase (417 aa).

Lys22–Asn23 is a phosphoenolpyruvate binding site. Arg93 serves as a coordination point for UDP-N-acetyl-alpha-D-glucosamine. Cys117 functions as the Proton donor in the catalytic mechanism. Cys117 bears the 2-(S-cysteinyl)pyruvic acid O-phosphothioketal mark. Residues Arg122–Gln126, Asp305, and Ile327 each bind UDP-N-acetyl-alpha-D-glucosamine.

The protein belongs to the EPSP synthase family. MurA subfamily.

The protein resides in the cytoplasm. It catalyses the reaction phosphoenolpyruvate + UDP-N-acetyl-alpha-D-glucosamine = UDP-N-acetyl-3-O-(1-carboxyvinyl)-alpha-D-glucosamine + phosphate. It functions in the pathway cell wall biogenesis; peptidoglycan biosynthesis. Cell wall formation. Adds enolpyruvyl to UDP-N-acetylglucosamine. This is UDP-N-acetylglucosamine 1-carboxyvinyltransferase from Chromobacterium violaceum (strain ATCC 12472 / DSM 30191 / JCM 1249 / CCUG 213 / NBRC 12614 / NCIMB 9131 / NCTC 9757 / MK).